An 837-amino-acid polypeptide reads, in one-letter code: ABC transporter A family member 8 (837 aa).

The next 7 membrane-spanning stretches (helical) occupy residues 29–49 (YFST…FYII), 244–264 (VVSL…FIFL), 303–323 (LIIC…FFLG), 326–346 (FLVL…MAFF), 356–376 (VAIG…LTFN), 393–413 (GAAF…SKVL), and 455–475 (LAYM…IEYA). The 235-residue stretch at 516–750 (IRGLSKTFNK…YGEGYSVQVI (235 aa)) folds into the ABC transporter domain. An ATP-binding site is contributed by 553-560 (GSNGAGKS).

It belongs to the ABC transporter superfamily. ABCA family.

The protein resides in the membrane. The protein is ABC transporter A family member 8 (abcA8) of Dictyostelium discoideum (Social amoeba).